The sequence spans 812 residues: Mitochondrial intermediate peptidase (812 aa).

The N-terminal 29 residues, 1–29, are a transit peptide targeting the mitochondrion; sequence MRLSRQLLRSTPFLTRAKPVSGKVSHFRS. Positions 19–49 are disordered; the sequence is PVSGKVSHFRSRTDLKGGSSNSSKSPDSVGD. Low complexity predominate over residues 37 to 46; sequence SSNSSKSPDS. H595 lines the Zn(2+) pocket. E596 is a catalytic residue. The Zn(2+) site is built by H599 and H602.

Belongs to the peptidase M3 family. It depends on Zn(2+) as a cofactor.

Its subcellular location is the mitochondrion matrix. The enzyme catalyses Release of an N-terminal octapeptide as second stage of processing of some proteins imported into the mitochondrion.. In terms of biological role, cleaves proteins, imported into the mitochondrion, to their mature size. While most mitochondrial precursor proteins are processed to the mature form in one step by mitochondrial processing peptidase (MPP), the sequential cleavage by MIP of an octapeptide after initial processing by MPP is a required step for a subgroup of nuclear-encoded precursor proteins destined for the matrix or the inner membrane. This chain is Mitochondrial intermediate peptidase (OCT1), found in Scheffersomyces stipitis (strain ATCC 58785 / CBS 6054 / NBRC 10063 / NRRL Y-11545) (Yeast).